Consider the following 109-residue polypeptide: Ribonuclease P protein component (109 aa).

This sequence belongs to the RnpA family. As to quaternary structure, consists of a catalytic RNA component (M1 or rnpB) and a protein subunit.

It carries out the reaction Endonucleolytic cleavage of RNA, removing 5'-extranucleotides from tRNA precursor.. In terms of biological role, RNaseP catalyzes the removal of the 5'-leader sequence from pre-tRNA to produce the mature 5'-terminus. It can also cleave other RNA substrates such as 4.5S RNA. The protein component plays an auxiliary but essential role in vivo by binding to the 5'-leader sequence and broadening the substrate specificity of the ribozyme. The protein is Ribonuclease P protein component of Mycoplasma capricolum subsp. capricolum (strain California kid / ATCC 27343 / NCTC 10154).